A 466-amino-acid polypeptide reads, in one-letter code: Ribosomal protein uS12 methylthiotransferase RimO (466 aa).

An MTTase N-terminal domain is found at 16-127 (PKVAFAHLGC…IVDVLQRVEA (112 aa)). Residues cysteine 25, cysteine 61, cysteine 90, cysteine 165, cysteine 169, and cysteine 172 each contribute to the [4Fe-4S] cluster site. Positions 151–380 (TTDQAVAYLK…MALQQPIAAE (230 aa)) constitute a Radical SAM core domain. A TRAM domain is found at 383–454 (QRWVGKTVDV…IYDLTGHIVG (72 aa)).

The protein belongs to the methylthiotransferase family. RimO subfamily. [4Fe-4S] cluster is required as a cofactor.

It is found in the cytoplasm. The enzyme catalyses L-aspartate(89)-[ribosomal protein uS12]-hydrogen + (sulfur carrier)-SH + AH2 + 2 S-adenosyl-L-methionine = 3-methylsulfanyl-L-aspartate(89)-[ribosomal protein uS12]-hydrogen + (sulfur carrier)-H + 5'-deoxyadenosine + L-methionine + A + S-adenosyl-L-homocysteine + 2 H(+). Functionally, catalyzes the methylthiolation of an aspartic acid residue of ribosomal protein uS12. The chain is Ribosomal protein uS12 methylthiotransferase RimO from Synechococcus sp. (strain CC9902).